Reading from the N-terminus, the 205-residue chain is Outer-membrane lipoprotein LolB (205 aa).

Positions 1-17 (MFLRHCITFTLIALLAG) are cleaved as a signal peptide. Cys-18 carries the N-palmitoyl cysteine lipid modification. The S-diacylglycerol cysteine moiety is linked to residue Cys-18.

Belongs to the LolB family. As to quaternary structure, monomer.

It localises to the cell outer membrane. Its function is as follows. Plays a critical role in the incorporation of lipoproteins in the outer membrane after they are released by the LolA protein. This is Outer-membrane lipoprotein LolB from Pseudomonas putida (strain W619).